A 414-amino-acid chain; its full sequence is MCMDRAICGNFYYGGKFDYLEVIVSDGKIAGIKKDAGNVPKTNYDGAILPAATDIHVHFRTPGETEKEDFGSGSLSAIYGGTTYVMDMPNNRFPITDYNAFGDKLGSIDSTSFADFSLYSMETGKNAMLLDRRSIGLKVYLGGSTNSTGTEVIEEGDIRKINEMNYPVVFHGESERCLKTHQMEEKNLRDHNLARPIDCEIEAAKYVSGLDIKTKIMAHVSSPDVTGNFLREVTPHHLLLNDEMPLGSFGKVNPPLRDSRTQKRLLDDYISGKFDILSSDHAPHTEDDKREFEFAKSGIIGVETRVPLFLALAQKKIVPLDVLYRTAIENPPSIFGIKKGKIEIGYDADFMVIDFTSMKRINDNRLHSKFPVSPFNGMDAIFPSHVIMRGNVVIDRYEDISDPMGVFIPKPQKE.

Residues His-56 and His-58 each contribute to the Zn(2+) site. Substrate-binding positions include His-58–Arg-60 and Asn-90. 4 residues coordinate Zn(2+): Lys-138, His-171, His-219, and Asp-280. Position 138 is an N6-carboxylysine (Lys-138). The active site involves Asp-280. A substrate-binding site is contributed by His-284.

It belongs to the metallo-dependent hydrolases superfamily. DHOase family. Class I DHOase subfamily. Zn(2+) is required as a cofactor.

It catalyses the reaction (S)-dihydroorotate + H2O = N-carbamoyl-L-aspartate + H(+). Its pathway is pyrimidine metabolism; UMP biosynthesis via de novo pathway; (S)-dihydroorotate from bicarbonate: step 3/3. Catalyzes the reversible cyclization of carbamoyl aspartate to dihydroorotate. The polypeptide is Dihydroorotase (Thermoplasma acidophilum (strain ATCC 25905 / DSM 1728 / JCM 9062 / NBRC 15155 / AMRC-C165)).